The primary structure comprises 469 residues: Pancreatic lipase-related protein 2 (469 aa).

A signal peptide spans 1–17; that stretch reads MLPSWTIGLLLLATVRG. Cys-21 and Cys-27 are disulfide-bonded. Asn-71 carries N-linked (GlcNAc...) asparagine glycosylation. The interval 93–105 is required for galactolipase activity; sequence IHGFIDDGDSGWP. Cys-109 and Cys-120 are disulfide-bonded. The Nucleophile role is filled by Ser-171. Asp-195 (charge relay system) is an active-site residue. 4 residues coordinate Ca(2+): Glu-206, Arg-209, Asp-211, and Asp-214. A disulfide bridge connects residues Cys-256 and Cys-280. The segment at 257–279 is required for galactolipase activity; that stretch reads QKNILSTIIDINGIWQGIQDFVA. Residue His-282 is the Charge relay system of the active site. Disulfide bonds link Cys-304-Cys-315 and Cys-318-Cys-323. N-linked (GlcNAc...) asparagine glycans are attached at residues Asn-353, Asn-399, and Asn-455. Positions 357-469 constitute a PLAT domain; sequence WRYRVSVTLA…ENALQTLYPC (113 aa). Cys-453 and Cys-469 are joined by a disulfide.

This sequence belongs to the AB hydrolase superfamily. Lipase family.

It is found in the secreted. The protein resides in the zymogen granule membrane. Its subcellular location is the cell projection. The protein localises to the neuron projection. The enzyme catalyses a triacylglycerol + H2O = a diacylglycerol + a fatty acid + H(+). It catalyses the reaction a 1,2-diacyl-3-O-(beta-D-galactosyl)-sn-glycerol + 2 H2O = 3-beta-D-galactosyl-sn-glycerol + 2 a fatty acid + 2 H(+). The catalysed reaction is 1,2,3-tri-(9Z-octadecenoyl)-glycerol + H2O = di-(9Z)-octadecenoylglycerol + (9Z)-octadecenoate + H(+). It carries out the reaction di-(9Z)-octadecenoylglycerol + H2O = (9Z-octadecenoyl)-glycerol + (9Z)-octadecenoate + H(+). The enzyme catalyses (9Z-octadecenoyl)-glycerol + H2O = glycerol + (9Z)-octadecenoate + H(+). It catalyses the reaction 1-(9Z-octadecenoyl)-glycerol + H2O = glycerol + (9Z)-octadecenoate + H(+). The catalysed reaction is 1,2,3-tripropanoylglycerol + H2O = dipropanoylglycerol + propanoate + H(+). It carries out the reaction 1,2,3-tributanoylglycerol + H2O = dibutanoylglycerol + butanoate + H(+). The enzyme catalyses 1,2,3-trioctanoylglycerol + H2O = dioctanoylglycerol + octanoate + H(+). It catalyses the reaction 1,2-didecanoylglycerol + H2O = decanoylglycerol + decanoate + H(+). The catalysed reaction is long chain 1,2-diacyl-3-O-beta-D-galactosyl-sn-glycerol + H2O = long chain acyl-3-O-beta-D-galactosyl-sn-glycerol + a fatty acid + H(+). It carries out the reaction 1,2-dioctanoyl-3-O-beta-D-galactosyl-sn-glycerol + H2O = octanoyl-3-(beta-D-galactosyl)-sn-glycerol + octanoate + H(+). The enzyme catalyses 1,2-didodecanoyl-3-beta-D-galactosyl-sn-glycerol + H2O = dodecanoyl-3-beta-D-galactosyl-sn-glycerol + dodecanoate + H(+). It catalyses the reaction 1-beta-D-galactosyl-2,3-didodecanoyl-sn-glycerol + H2O = 1-beta-D-galactosyl-dodecanoyl-sn-glycerol + dodecanoate + H(+). The catalysed reaction is a 1,2-diacyl-3-O-[alpha-D-galactosyl-(1-&gt;6)-beta-D-galactosyl]-sn-glycerol + H2O = acyl-3-O-[alpha-D-galactosyl-(1-&gt;6)-beta-D-galactosyl]-sn-glycerol + a fatty acid + H(+). It carries out the reaction long chain 1,2-diacyl-3-O-[alpha-D-galactosyl-(1-&gt;6)-beta-D-galactosyl]-sn-glycerol + H2O = long chain acyl-3-O-[alpha-D-galactosyl-(1-&gt;6)-beta-D-galactosyl]-sn-glycerol + a fatty acid + H(+). The enzyme catalyses 1,2-dioctanoyl-3-O-[alpha-D-galactosyl-(1-&gt;6)-beta-D-galactosyl]-sn-glycerol + H2O = octanoyl-3-O-[alpha-D-galactosyl-(1-&gt;6)-beta-D-galactosyl]-sn-glycerol + octanoate + H(+). It catalyses the reaction 1,2-didodecanoyl-3-O-[alpha-D-galactosyl-(1-&gt;6)-beta-D-galactosyl]-sn-glycerol + H2O = dodecanoyl-3-O-[alpha-D-galactosyl-(1-&gt;6)-beta-D-galactosyl]-sn-glycerol + dodecanoate + H(+). The catalysed reaction is a 1,2-diacyl-sn-glycero-3-phosphocholine + H2O = a monoacyl-sn-glycero-3-phosphocholine + a fatty acid + H(+). It participates in glycerolipid metabolism; triacylglycerol degradation. It functions in the pathway glycolipid metabolism. Its function is as follows. Lipase that primarily hydrolyzes triglycerides and galactosylglycerides. In neonates, may play a major role in pancreatic digestion of dietary fats such as milk fat globules enriched in long-chain triglycerides. Hydrolyzes short-, medium- and long-chain fatty acyls in triglycerides without apparent positional specificity. Can completely deacylate triacylglycerols. When the liver matures and bile salt synthesis increases, likely functions mainly as a galactolipase and monoacylglycerol lipase. Hydrolyzes monogalactosyldiglycerols (MGDG) and digalactosyldiacylglycerols (DGDG) present in a plant-based diet, releasing long-chain polyunsaturated fatty acids. Hydrolyzes medium- and long-chain fatty acyls in galactolipids. May act together with LIPF to hydrolyze partially digested triglycerides. Hydrolyzes long-chain monoglycerides with high efficiency. In cytotoxic T cells, contributes to perforin-dependent cell lysis, but is unlikely to mediate direct cytotoxicity. Also has low phospholipase activity. In neurons, required for the localization of the phospholipid 1-oleoyl-2-palmitoyl-PC (OPPC) to neurite tips through acyl chain remodeling of membrane phospholipids. The resulting OPPC-rich lipid membrane domain recruits the t-SNARE protein STX4 by selectively interacting with the STX4 transmembrane domain and this promotes surface expression of the dopamine transporter SLC6A3/DAT at neurite tips by facilitating fusion of SLC6A3-containing transport vesicles with the plasma membrane. This Bos taurus (Bovine) protein is Pancreatic lipase-related protein 2.